We begin with the raw amino-acid sequence, 543 residues long: ADP,ATP carrier protein 3 (543 aa).

10 consecutive transmembrane segments (helical) span residues 46–66 (VLYL…MGNL), 86–106 (IFLP…LSLF), 111–131 (MFDI…LVVW), 175–195 (FLFL…FNIF), 209–229 (ISVY…LTLV), 243–263 (ELGF…ILAL), 306–326 (LLIA…LVEA), 346–366 (FANF…LVVI), 382–402 (LASL…LIAF), and 504–524 (SVSG…LKYL).

It belongs to the ADP/ATP translocase tlc family.

It is found in the mitosome membrane. Its function is as follows. ATP transporter involved in the uptake of ATP from the parasite cell cytoplasm into the mitosome matrix. Equilibrates nucleotide pools across a concentration gradient between both sides of the mitosome membrane. The sequence is that of ADP,ATP carrier protein 3 (NTT3) from Encephalitozoon cuniculi (strain GB-M1) (Microsporidian parasite).